The sequence spans 162 residues: MSLIALPLRLLRLLPAITSTWVLAFALDEHLIFGTWVQPSLRESANANLPAWWTTGGLRWRWILIVVYPINYALGVVNLFVGRDELRATGAMSWYTIGLLFSLAHMGYMRTALDRIGMIERGVPRGNVTSSMESWLRMNRTRALVTDLPAWICFVTAALKAL.

An N-terminal signal peptide occupies residues 1 to 26 (MSLIALPLRLLRLLPAITSTWVLAFA). 2 consecutive transmembrane segments (helical) span residues 62–82 (WILI…LFVG) and 89–109 (TGAM…MGYM). 2 N-linked (GlcNAc...) asparagine glycosylation sites follow: N127 and N139.

It belongs to the epoxidase xenD family.

It localises to the membrane. Its pathway is mycotoxin biosynthesis. In terms of biological role, epoxidase; part of the gene cluster that mediates the biosynthesis of pyrrocidines, fungal natural products containing a macrocyclic para-cyclophane connected to a decahydrofluorene ring system that show potent antibiotic activities toward Gram-negative bacteria. Within the pathway, pydX functions synergistically with pydB, pydE and pydZ to form the cyclophane. The pathway begins with the PKS-NRPS pydA which, with the help of the trans-enoyl reductase pydC, synthesizes the polyketide-tyrosyl acyl thioester product which can be reductively off-loaded by the terminal reductase (R) domain in pydA. The alpha/beta hydrolase pydG is then required to catalyze the subsequent Knoevenagel condensation that affords the 3-pyrrolin-2-one ring, whereas the four proteins pydB, pydE, pydX and pydZ then function synergistically to form the cyclophane. PydB and the membrane-bound pydX and pydZ are lipid-binding proteins that can sequester and mold the pdyG product into the inverse S-shape. Binding of the medium chain reductase pydE to the complex would trigger the cascade oxidative cyclization. PydY is involved in the Diels-Alder cycloaddition that forms the decahydrofluorene core. Additional non-enzymatic hydroxylation yields pyrrocidine A2 which can be further reduced into pyrrocidine B by an endogenous reductase. The chain is Epoxidase pydX from Acremonium sp.